The sequence spans 229 residues: MPLNEPSSNAFPRTVLFDLDGTLLDSAPDMLATANAMLAARGRAPITLAQLRPVISIGTFRILAVAFPELDAAAIQGLIPEFLQRYEALIGSVSKPFDGVEMMLDALECAGTVWGIVTNKPEFLARLILPLLGWTSRCAVLIGGDTLAERKPHPLPLLTAAERIGVMPTDCVYVGDDVSDIQAARAAGMPSMVALWGYRSHEDNPMTWQADTLVEQPHLLSRPDVWPST.

Asp18 (nucleophile) is an active-site residue. Positions 18, 20, and 176 each coordinate Mg(2+).

The protein belongs to the HAD-like hydrolase superfamily. CbbY/CbbZ/Gph/YieH family. The cofactor is Mg(2+).

It carries out the reaction 2-phosphoglycolate + H2O = glycolate + phosphate. It participates in organic acid metabolism; glycolate biosynthesis; glycolate from 2-phosphoglycolate: step 1/1. Its function is as follows. Specifically catalyzes the dephosphorylation of 2-phosphoglycolate. Is involved in the dissimilation of the intracellular 2-phosphoglycolate formed during the DNA repair of 3'-phosphoglycolate ends, a major class of DNA lesions induced by oxidative stress. The protein is Phosphoglycolate phosphatase of Xylella fastidiosa (strain 9a5c).